A 908-amino-acid chain; its full sequence is MAEAFVSFGLEKLWDLLSRESERLQGIDGQLDGLKRQLRSLQSLLKDADAKKHGSDRVRNFLEDVKDLVFDAEDIIESYVLNKLSGKGKGVKKHVRRLACFLTDRHKVASDIEGITKRISEVIGEMQSFGIQQIIDGGRSLSLQERQRVQREIRQTYPDSSESDLVGVEQSVKELVGHLVENDVHQVVSIAGMGGIGKTTLARQVFHHDLVRRHFDGFAWVCVSQQFTQKHVWQRILQELQPHDGDILQMDEYALQRKLFQLLEAGRYLVVLDDVWKKEDWDVIKAVFPRKRGWKMLLTSRNEGVGIHADPTCLTFRASILNPEESWKLCERIVFPRRDETEVRLDEEMEAMGKEMVTHCGGLPLAVKALGGLLANKHTVPEWKRVFDNIGSQIVGGSWLDDNSLNSVYRILSLSYEDLPTHLKHCFLNLAHFPEDSEISTYSLFYYWAAEGIYDGSTIEDSGEYYLEELVRRNLVIADDNYLSWQSKYCQMHDMMREVCLSKAKEENFLQIIIDPTCTSTINAQSPSRSRRLSIHSGKAFHILGHKNKTKVRSLIVPRFEEDYWIRSASVFHNLTLLRVLDLSWVKFEGGKLPCSIGGLIHLRYLSLYEAKVSHLPSTMRNLKLLLYLNLRVDTEEPIHVPNVLKEMIQLRYLSLPLKMDDKTKLELGDLVNLEYLYGFSTQHSSVTDLLRMTKLRYLAVSLSERCNFETLSSSLRELRNLETLNFLFSLETYMVDYMGEFVLDHFIHLKQLGLAVRMSKIPDQHQFPPHLVHLFLIYCGMEEDPMPILEKLLHLKSVRLARKAFLGSRMVCSKGGFPQLCVIEISKESELEEWIVEEGSMPCLRTLTIDDCKKLKELPDGLKYITSLKELKIEGMKREWKEKLVPGGEDYYKVQHIPDVQFINCDQ.

Residues 15–57 (DLLSRESERLQGIDGQLDGLKRQLRSLQSLLKDADAKKHGSDR) are a coiled coil. Positions 146-459 (RQRVQREIRQ…AEGIYDGSTI (314 aa)) constitute an NB-ARC domain. An ATP-binding site is contributed by 192-199 (GMGGIGKT). LRR repeat units lie at residues 575–600 (LTLLRVLDLSWVKFEGGKLPCSIGGL), 601–623 (IHLRYLSLYEAKVSHLPSTMRNL), 648–673 (MIQLRYLSLPLKMDDKTKLELGDLVN), 693–718 (MTKLRYLAVSLSERCNFETLSSSLRE), 722–746 (LETLNFLFSLETYMVDYMGEFVLDH), 748–770 (IHLKQLGLAVRMSKIPDQHQFPP), 793–820 (LLHLKSVRLARKAFLGSRMVCSKGGFPQ), 842–867 (MPCLRTLTIDDCKKLKELPDGLKYIT), and 882–905 (KEKLVPGGEDYYKVQHIPDVQFIN).

Belongs to the disease resistance NB-LRR family. RPP8/HRT subfamily. In terms of assembly, interacts with the NAC protein TIP. Interacts with MORC1/CRT1. Interacts with COP1 and is subsequently degraded in a 26s proteasome dependent manner. Mostly expressed in leaves, and, to a lower extent, in roots.

The protein resides in the cell membrane. Disease resistance protein. Resistance proteins guard the plant against pathogens that contain an appropriate avirulence protein via an indirect interaction with this avirulence protein. That triggers a defense system including the hypersensitive response, which restricts the pathogen growth. The interaction with TIP (TCV-interacting protein) may be essential for the recognition of the avirulence proteins, and the triggering of the defense response. Triggers resistance to turnip crinkle virus (TCV) via a SAG101-dependent pathway. This Arabidopsis thaliana (Mouse-ear cress) protein is Disease resistance protein RPP8 (RPP8).